Here is a 190-residue protein sequence, read N- to C-terminus: Peptidyl-tRNA hydrolase (190 aa).

Tyr18 is a tRNA binding site. His23 functions as the Proton acceptor in the catalytic mechanism. Residues Tyr69, Asn71, and Asn117 each contribute to the tRNA site.

It belongs to the PTH family. In terms of assembly, monomer.

The protein resides in the cytoplasm. It carries out the reaction an N-acyl-L-alpha-aminoacyl-tRNA + H2O = an N-acyl-L-amino acid + a tRNA + H(+). Its function is as follows. Hydrolyzes ribosome-free peptidyl-tRNAs (with 1 or more amino acids incorporated), which drop off the ribosome during protein synthesis, or as a result of ribosome stalling. In terms of biological role, catalyzes the release of premature peptidyl moieties from peptidyl-tRNA molecules trapped in stalled 50S ribosomal subunits, and thus maintains levels of free tRNAs and 50S ribosomes. The sequence is that of Peptidyl-tRNA hydrolase from Rhodococcus erythropolis (strain PR4 / NBRC 100887).